A 200-amino-acid polypeptide reads, in one-letter code: Lipopolysaccharide core heptose(II)-phosphate phosphatase (200 aa).

Residues 1–25 (MLAFCRSSLKSKKYFIILLALAAIA) form the signal peptide.

It belongs to the phosphoglycerate mutase family. Ais subfamily.

Its subcellular location is the periplasm. Its pathway is bacterial outer membrane biogenesis; lipopolysaccharide metabolism. Functionally, catalyzes the dephosphorylation of heptose(II) of the outer membrane lipopolysaccharide core. This is Lipopolysaccharide core heptose(II)-phosphate phosphatase from Escherichia coli O9:H4 (strain HS).